Here is a 208-residue protein sequence, read N- to C-terminus: Uracil phosphoribosyltransferase (208 aa).

5-phospho-alpha-D-ribose 1-diphosphate-binding positions include arginine 78, arginine 103, and 130–138; that span reads DPMLATANS. Uracil contacts are provided by residues isoleucine 193 and 198 to 200; that span reads GDA. Aspartate 199 lines the 5-phospho-alpha-D-ribose 1-diphosphate pocket.

This sequence belongs to the UPRTase family. Mg(2+) serves as cofactor.

It catalyses the reaction UMP + diphosphate = 5-phospho-alpha-D-ribose 1-diphosphate + uracil. It participates in pyrimidine metabolism; UMP biosynthesis via salvage pathway; UMP from uracil: step 1/1. Allosterically activated by GTP. In terms of biological role, catalyzes the conversion of uracil and 5-phospho-alpha-D-ribose 1-diphosphate (PRPP) to UMP and diphosphate. This chain is Uracil phosphoribosyltransferase, found in Brucella melitensis biotype 2 (strain ATCC 23457).